The chain runs to 92 residues: Precursor of CEP12 (92 aa).

Positions 1–30 (MVNRDNSIVALSFFMLFLLVLHLHFETTTA) are cleaved as a signal peptide. Positions 31–70 (ARKPVRVFGPPSSIEWSPPSPPKDDFEWFEINIYKNIEQT) are excised as a propeptide. The disordered stretch occupies residues 70 to 92 (TAFRPTGQGPSQGIGHKDPPGAP). Hydroxyproline is present on residues Pro-74 and Pro-79. The propeptide occupies 86 to 92 (KDPPGAP).

Belongs to the C-terminally encoded plant signaling peptide (CEP) family. As to quaternary structure, interacts with CEP receptors (e.g. CEPR1 and CEPR2). The mature small signaling peptide is generated by proteolytic processing of the longer precursor.

It is found in the secreted. Its subcellular location is the extracellular space. The protein localises to the apoplast. In terms of biological role, extracellular signaling peptide that may regulate primary root growth rate and systemic nitrogen (N)-demand signaling. The chain is Precursor of CEP12 from Arabidopsis thaliana (Mouse-ear cress).